The following is a 478-amino-acid chain: Glycogen synthase (478 aa).

Position 20 (lysine 20) interacts with ADP-alpha-D-glucose.

This sequence belongs to the glycosyltransferase 1 family. Bacterial/plant glycogen synthase subfamily.

It catalyses the reaction [(1-&gt;4)-alpha-D-glucosyl](n) + ADP-alpha-D-glucose = [(1-&gt;4)-alpha-D-glucosyl](n+1) + ADP + H(+). It participates in glycan biosynthesis; glycogen biosynthesis. Its function is as follows. Synthesizes alpha-1,4-glucan chains using ADP-glucose. This Cereibacter sphaeroides (strain ATCC 17023 / DSM 158 / JCM 6121 / CCUG 31486 / LMG 2827 / NBRC 12203 / NCIMB 8253 / ATH 2.4.1.) (Rhodobacter sphaeroides) protein is Glycogen synthase.